A 199-amino-acid chain; its full sequence is Glycerol-3-phosphate acyltransferase (199 aa).

A run of 5 helical transmembrane segments spans residues 3–23 (AAVW…GVLV), 50–70 (WGPA…AVLV), 78–98 (DWML…SVFL), 113–133 (LLFL…SVIL), and 154–174 (LALG…LLIF).

The protein belongs to the PlsY family. Probably interacts with PlsX.

It is found in the cell inner membrane. It catalyses the reaction an acyl phosphate + sn-glycerol 3-phosphate = a 1-acyl-sn-glycero-3-phosphate + phosphate. It functions in the pathway lipid metabolism; phospholipid metabolism. In terms of biological role, catalyzes the transfer of an acyl group from acyl-phosphate (acyl-PO(4)) to glycerol-3-phosphate (G3P) to form lysophosphatidic acid (LPA). This enzyme utilizes acyl-phosphate as fatty acyl donor, but not acyl-CoA or acyl-ACP. This is Glycerol-3-phosphate acyltransferase from Thermus thermophilus (strain ATCC BAA-163 / DSM 7039 / HB27).